Reading from the N-terminus, the 303-residue chain is ATP phosphoribosyltransferase (303 aa).

It belongs to the ATP phosphoribosyltransferase family. Long subfamily. Mg(2+) serves as cofactor.

The protein localises to the cytoplasm. It carries out the reaction 1-(5-phospho-beta-D-ribosyl)-ATP + diphosphate = 5-phospho-alpha-D-ribose 1-diphosphate + ATP. It participates in amino-acid biosynthesis; L-histidine biosynthesis; L-histidine from 5-phospho-alpha-D-ribose 1-diphosphate: step 1/9. Feedback inhibited by histidine. Its function is as follows. Catalyzes the condensation of ATP and 5-phosphoribose 1-diphosphate to form N'-(5'-phosphoribosyl)-ATP (PR-ATP). Has a crucial role in the pathway because the rate of histidine biosynthesis seems to be controlled primarily by regulation of HisG enzymatic activity. This Stenotrophomonas maltophilia (strain R551-3) protein is ATP phosphoribosyltransferase.